The following is a 99-amino-acid chain: Monothiol glutaredoxin-S11 (99 aa).

The Glutaredoxin domain occupies 1–99; that stretch reads MDKVMRMSSE…LVPLVKPYLC (99 aa). Residue C21 participates in [2Fe-2S] cluster binding.

It belongs to the glutaredoxin family. CC-type subfamily.

Its subcellular location is the cytoplasm. Functionally, may only reduce GSH-thiol disulfides, but not protein disulfides. This is Monothiol glutaredoxin-S11 (GRXS11) from Arabidopsis thaliana (Mouse-ear cress).